We begin with the raw amino-acid sequence, 276 residues long: Myoblast determination protein 1 homolog 1 (276 aa).

The 52-residue stretch at 84–135 (DRRKAATMRERRRLSKVNDAFETLKRCTSTNPNQRLPKVDILRNAISYIESL) folds into the bHLH domain. Positions 228–253 (CPAVQDGSEGSSPCSPGDGSIASENG) are disordered.

In terms of assembly, efficient DNA binding requires dimerization with another bHLH protein.

Its subcellular location is the nucleus. May act as a transcriptional activator that promotes transcription of muscle-specific target genes and plays a role in muscle differentiation. This Oncorhynchus mykiss (Rainbow trout) protein is Myoblast determination protein 1 homolog 1 (myod1).